The chain runs to 566 residues: MSEELHSDLIASIFGGKPAKIEEFFSKWNFANAAVSKFDMANSAKNELGDRICEVIENGELTHVLLETIKILSREKDGLEGLLNDPLCDKILAFAELSSNENNSKTVHTLMEAQKCLINTLFHSQRMRDRFYANPKTGENLQFFLGEFEENRRKTSSIDWIRLLNPVQAAEIWYFYHRIAFIATALGREFQKNWANDPKTIDSLLLAVEICTNRSENSTQDINRATEALKTFFNVFCHFHGDVKAIDHKNAAKTCQILRDAICSDVLTDDVVQSAIHCLSVPPLPMVLSVLCGKNSKNNGGENEEEKFFVEELSNMQLTEAILMHLDKQLTKVVALLLNDAPNQQQNPMLSAEASTLTDLVGPYFQVLARLCTDSKYVRRYCRIRVIPPLVSEEVQKRPEENNTLRGRIARIMMLPSSTKDVAAEFLFIICKRSVNRMIKYLGFGHSAGHLANLGLLGQINQPKHASDSEDSETEDYNQIKDSVNPVTGAIYPSDHGSALAGMSEEQKEYEAMKLVDAMNQMMETGIVKPGTIGDDGKIREVSHVLELLKNAPEPAPAENSDSDEE.

The protein belongs to the synembryn family. Interacts with GDP-bound G-alpha proteins goa-1 and gpa-16. Does not interact with G-alpha proteins when they are in complex with subunits beta and gamma. As to expression, present throughout the nervous system in juveniles and adults (at protein level).

It localises to the cytoplasm. The protein localises to the cell cortex. Its function is as follows. Chaperone that specifically binds and folds some, but not all, nascent G alpha proteins prior to G protein heterotrimer formation, promoting their stability and activity. Also acts as a guanine nucleotide exchange factor (GEF) for G alpha proteins by stimulating exchange of bound GDP for free GTP. Able to facilitate synaptic transmission in the nervous system probably by activating G(q)-alpha (egl-30). Also able to activate the G(s)-alpha in synaptic signaling network. Plays a key role in asymmetric spindle positioning, a step for asymmetric cell division that generates cell diversity during development by activating G(i)-alpha protein goa-1 and gpa-16 independently of G-protein coupled receptors. While it acts as a GEF for goa-1, it has no GEF activity toward gpa-16. In addition to its GEF activity, it is required for cortical subcellular localization of G-alpha proteins such as gpa-16. Also required for the interaction of goa-1 and gpr-1/2, suggesting that it may act by generating G-alpha proteins free from G-beta-gamma subunits, enabling gpr-1/2 to mediate asymmetric cell division. The chain is Chaperone ric-8 (ric-8) from Caenorhabditis elegans.